A 183-amino-acid chain; its full sequence is Large ribosomal subunit protein uL10 (183 aa).

This sequence belongs to the universal ribosomal protein uL10 family. Part of the ribosomal stalk of the 50S ribosomal subunit. The N-terminus interacts with L11 and the large rRNA to form the base of the stalk. The C-terminus forms an elongated spine to which L12 dimers bind in a sequential fashion forming a multimeric L10(L12)X complex.

Its function is as follows. Forms part of the ribosomal stalk, playing a central role in the interaction of the ribosome with GTP-bound translation factors. In Mesomycoplasma hyopneumoniae (strain 7448) (Mycoplasma hyopneumoniae), this protein is Large ribosomal subunit protein uL10.